A 217-amino-acid chain; its full sequence is Protein dao-4 (217 aa).

The first 21 residues, 1–21 (MKIALYSILLITVCYLSSTDA), serve as a signal peptide directing secretion.

It is found in the nucleus. It localises to the secreted. In terms of biological role, probably acts downstream of the Wnt signaling pathway. The polypeptide is Protein dao-4 (Caenorhabditis elegans).